Reading from the N-terminus, the 376-residue chain is Chaperone protein DnaJ (376 aa).

The J domain maps to 4–70 (DYYQILGVSK…QKRAAYDRFG (67 aa)). The segment at 139–217 (GVEKNISFSS…CHGLGRYHKQ (79 aa)) adopts a CR-type zinc-finger fold. 8 residues coordinate Zn(2+): cysteine 152, cysteine 155, cysteine 169, cysteine 172, cysteine 191, cysteine 194, cysteine 205, and cysteine 208. 4 CXXCXGXG motif repeats span residues 152 to 159 (CDTCHGSG), 169 to 176 (CDACGGVG), 191 to 198 (CHKCQGNG), and 205 to 212 (CKKCHGLG).

This sequence belongs to the DnaJ family. As to quaternary structure, homodimer. It depends on Zn(2+) as a cofactor.

The protein resides in the cytoplasm. Participates actively in the response to hyperosmotic and heat shock by preventing the aggregation of stress-denatured proteins and by disaggregating proteins, also in an autonomous, DnaK-independent fashion. Unfolded proteins bind initially to DnaJ; upon interaction with the DnaJ-bound protein, DnaK hydrolyzes its bound ATP, resulting in the formation of a stable complex. GrpE releases ADP from DnaK; ATP binding to DnaK triggers the release of the substrate protein, thus completing the reaction cycle. Several rounds of ATP-dependent interactions between DnaJ, DnaK and GrpE are required for fully efficient folding. Also involved, together with DnaK and GrpE, in the DNA replication of plasmids through activation of initiation proteins. The protein is Chaperone protein DnaJ of Rickettsia bellii (strain OSU 85-389).